The primary structure comprises 467 residues: ATP synthase subunit beta (467 aa).

Position 150–157 (150–157 (GGAGVGKT)) interacts with ATP.

It belongs to the ATPase alpha/beta chains family. In terms of assembly, F-type ATPases have 2 components, CF(1) - the catalytic core - and CF(0) - the membrane proton channel. CF(1) has five subunits: alpha(3), beta(3), gamma(1), delta(1), epsilon(1). CF(0) has three main subunits: a(1), b(2) and c(9-12). The alpha and beta chains form an alternating ring which encloses part of the gamma chain. CF(1) is attached to CF(0) by a central stalk formed by the gamma and epsilon chains, while a peripheral stalk is formed by the delta and b chains.

It localises to the cell inner membrane. The catalysed reaction is ATP + H2O + 4 H(+)(in) = ADP + phosphate + 5 H(+)(out). Its function is as follows. Produces ATP from ADP in the presence of a proton gradient across the membrane. The catalytic sites are hosted primarily by the beta subunits. The protein is ATP synthase subunit beta of Aliivibrio fischeri (strain MJ11) (Vibrio fischeri).